The following is a 391-amino-acid chain: Putative B3 domain-containing protein Os08g0325100 (391 aa).

A DNA-binding region (TF-B3) is located at residues 32-125 (GDFQHEIRGE…QFDVIIFDQV (94 aa)). Positions 143-232 (VQEGRTDATE…SSRAHPQPMP (90 aa)) are disordered. A compositionally biased stretch (polar residues) spans 172–226 (EGRTNATETLNSSRAHSQPMPMQTPATETLNSSRAHSQDMPMQSPATETLNSSRA).

The protein resides in the nucleus. The chain is Putative B3 domain-containing protein Os08g0325100 from Oryza sativa subsp. japonica (Rice).